We begin with the raw amino-acid sequence, 22 residues long: Superoxide dismutase [Cu-Zn] (22 aa).

The protein belongs to the Cu-Zn superoxide dismutase family. Homodimer. It depends on Cu cation as a cofactor. Zn(2+) serves as cofactor.

The protein resides in the cytoplasm. It carries out the reaction 2 superoxide + 2 H(+) = H2O2 + O2. Destroys radicals which are normally produced within the cells and which are toxic to biological systems. This chain is Superoxide dismutase [Cu-Zn], found in Hordeum vulgare (Barley).